A 419-amino-acid chain; its full sequence is Gamma-glutamyl phosphate reductase (419 aa).

This sequence belongs to the gamma-glutamyl phosphate reductase family.

It is found in the cytoplasm. It catalyses the reaction L-glutamate 5-semialdehyde + phosphate + NADP(+) = L-glutamyl 5-phosphate + NADPH + H(+). It functions in the pathway amino-acid biosynthesis; L-proline biosynthesis; L-glutamate 5-semialdehyde from L-glutamate: step 2/2. Catalyzes the NADPH-dependent reduction of L-glutamate 5-phosphate into L-glutamate 5-semialdehyde and phosphate. The product spontaneously undergoes cyclization to form 1-pyrroline-5-carboxylate. This Yersinia enterocolitica serotype O:8 / biotype 1B (strain NCTC 13174 / 8081) protein is Gamma-glutamyl phosphate reductase.